We begin with the raw amino-acid sequence, 168 residues long: G/U mismatch-specific DNA glycosylase (168 aa).

It belongs to the uracil-DNA glycosylase (UDG) superfamily. TDG/mug family. Binds DNA as a monomer.

The protein resides in the cytoplasm. The catalysed reaction is Specifically hydrolyzes mismatched double-stranded DNA and polynucleotides, releasing free uracil.. Excises ethenocytosine and uracil, which can arise by alkylation or deamination of cytosine, respectively, from the corresponding mispairs with guanine in ds-DNA. It is capable of hydrolyzing the carbon-nitrogen bond between the sugar-phosphate backbone of the DNA and the mispaired base. The complementary strand guanine functions in substrate recognition. Required for DNA damage lesion repair in stationary-phase cells. The sequence is that of G/U mismatch-specific DNA glycosylase from Escherichia coli O9:H4 (strain HS).